A 430-amino-acid chain; its full sequence is Adenylosuccinate synthetase (430 aa).

GTP is bound by residues 12 to 18 (GDEGKGK) and 40 to 42 (GHT). Aspartate 13 serves as the catalytic Proton acceptor. Residues aspartate 13 and glycine 40 each coordinate Mg(2+). IMP-binding positions include 13–16 (DEGK), 38–41 (NAGH), threonine 130, arginine 144, glutamine 224, threonine 239, and arginine 303. Histidine 41 acts as the Proton donor in catalysis. Position 299–305 (299–305 (VNTGRKR)) interacts with substrate. Residues arginine 305, 331–333 (KLD), and 413–415 (STS) each bind GTP.

It belongs to the adenylosuccinate synthetase family. In terms of assembly, homodimer. It depends on Mg(2+) as a cofactor.

It localises to the cytoplasm. It catalyses the reaction IMP + L-aspartate + GTP = N(6)-(1,2-dicarboxyethyl)-AMP + GDP + phosphate + 2 H(+). Its pathway is purine metabolism; AMP biosynthesis via de novo pathway; AMP from IMP: step 1/2. In terms of biological role, plays an important role in the de novo pathway of purine nucleotide biosynthesis. Catalyzes the first committed step in the biosynthesis of AMP from IMP. The polypeptide is Adenylosuccinate synthetase (Rhodopseudomonas palustris (strain TIE-1)).